The following is a 255-amino-acid chain: Aliphatic sulfonates import ATP-binding protein SsuB (255 aa).

Residues 12–233 (LLLNAVSKHY…RLGSVRLAEL (222 aa)) form the ABC transporter domain. 44–51 (GRSGGGKS) contributes to the ATP binding site.

This sequence belongs to the ABC transporter superfamily. Aliphatic sulfonates importer (TC 3.A.1.17.2) family. The complex is composed of two ATP-binding proteins (SsuB), two transmembrane proteins (SsuC) and a solute-binding protein (SsuA).

It localises to the cell inner membrane. It catalyses the reaction ATP + H2O + aliphatic sulfonate-[sulfonate-binding protein]Side 1 = ADP + phosphate + aliphatic sulfonateSide 2 + [sulfonate-binding protein]Side 1.. Functionally, part of the ABC transporter complex SsuABC involved in aliphatic sulfonates import. Responsible for energy coupling to the transport system. The sequence is that of Aliphatic sulfonates import ATP-binding protein SsuB from Escherichia coli O1:K1 / APEC.